Reading from the N-terminus, the 197-residue chain is Adenylylsulfatase HINT3 (197 aa).

The tract at residues 14–43 is disordered; sequence NPPGPNPTRDPTLRVSDCSSGSSGDGKVES. In terms of domain architecture, HIT spans 51 to 158; the sequence is VFCKIIRGES…IPRKERDCLW (108 aa). A Histidine triad motif motif is present at residues 143 to 147; it reads HTHIH. H145 functions as the Tele-AMP-histidine intermediate in the catalytic mechanism. H147 lines the substrate pocket.

The protein localises to the peroxisome. The catalysed reaction is adenosine 5'-phosphosulfate + H2O = sulfate + AMP + 2 H(+). Its function is as follows. Possesses adenylylsulfatase activity in vitro. The sequence is that of Adenylylsulfatase HINT3 from Arabidopsis thaliana (Mouse-ear cress).